The chain runs to 254 residues: Triosephosphate isomerase, cytosolic (254 aa).

2 residues coordinate substrate: N10 and K12. The Electrophile role is filled by H96. Catalysis depends on E166, which acts as the Proton acceptor.

This sequence belongs to the triosephosphate isomerase family. In terms of assembly, homodimer.

The protein resides in the cytoplasm. The catalysed reaction is D-glyceraldehyde 3-phosphate = dihydroxyacetone phosphate. It functions in the pathway carbohydrate biosynthesis; gluconeogenesis. The protein operates within carbohydrate degradation; glycolysis; D-glyceraldehyde 3-phosphate from glycerone phosphate: step 1/1. In Petunia hybrida (Petunia), this protein is Triosephosphate isomerase, cytosolic (TPIP1).